The following is a 443-amino-acid chain: Threonine/serine transporter TdcC (443 aa).

The next 11 helical transmembrane spans lie at 24 to 44 (WVLGLFGTAIGAGVLFFPISA), 45 to 65 (GIGGLLPIIFMLILAFPIAFF), 95 to 115 (VGGVVITFLYFFAICPLLWIY), 140 to 160 (VVALAILLVMAFFIYFGKDLM), 163 to 183 (VMGYLVFPFITCLVLISLSLI), 207 to 227 (ILVTVWLGIAIMVFSFNFSPI), 259 to 279 (ASVLMVVVVMFFAFSCLFTLS), 319 to 339 (ASIIALVAIFKSFFGHYLGTL), 363 to 383 (LNMISMVIIMGSTWVIAYINP), 385 to 405 (ILDLIGAMGAPIIAALLCLLP), and 423 to 443 (SNYFVTIIGLLTILNIVYQLM).

This sequence belongs to the amino acid/polyamine transporter 2 family. SdaC/TdcC subfamily.

It localises to the cell inner membrane. The enzyme catalyses L-threonine(in) + H(+)(in) = L-threonine(out) + H(+)(out). The catalysed reaction is L-serine(in) + H(+)(in) = L-serine(out) + H(+)(out). Functionally, involved in the import of threonine and serine into the cell, with the concomitant import of a proton (symport system). The sequence is that of Threonine/serine transporter TdcC from Edwardsiella piscicida.